The sequence spans 98 residues: uncharacterized protein (98 aa).

This is an uncharacterized protein from Invertebrate iridescent virus 6 (IIV-6).